The following is a 353-amino-acid chain: WAT1-related protein At3g28100 (353 aa).

The next 10 membrane-spanning stretches (helical) occupy residues 12–32 (AVFLTAMLATETGVVGISTLF), 43–63 (YAFLGYSYLLASLLLLPSLFF), 81–101 (IGLLGLLGSMYVITGYIGIEY), 105–125 (TLASAISNITPALTFILAIIF), 137–157 (SVAKVMGTILSLIGALVVVLY), 187–207 (WLIGGALLTIRDIFVSVSFIL), 219–239 (FTVSFLYIVSVSIVTSMIGLV), 252–272 (FDITLITIVTMAIITSVYYVI), 283–303 (LYLAIFKPLSILIAVVMSAVF), and 308–328 (LYLGCLIGGLLITLGFYAVMW). Residues 27–155 (GISTLFKVAT…LSLIGALVVV (129 aa)) enclose the EamA domain.

The protein belongs to the drug/metabolite transporter (DMT) superfamily. Plant drug/metabolite exporter (P-DME) (TC 2.A.7.4) family.

Its subcellular location is the membrane. The protein is WAT1-related protein At3g28100 of Arabidopsis thaliana (Mouse-ear cress).